The following is a 109-amino-acid chain: Transcription initiation factor IIA subunit 2 (109 aa).

Belongs to the TFIIA subunit 2 family. As to quaternary structure, TFIIA is a heterodimer composed of the large toa1 and the small toa2 subunits.

Its subcellular location is the nucleus. The protein localises to the cytoplasm. In terms of biological role, TFIIA is a component of the transcription machinery of RNA polymerase II and plays an important role in transcriptional activation. TFIIA in a complex with tbp mediates transcriptional activity. The protein is Transcription initiation factor IIA subunit 2 (toa2) of Schizosaccharomyces pombe (strain 972 / ATCC 24843) (Fission yeast).